Reading from the N-terminus, the 859-residue chain is ATP-dependent RNA helicase DDX24 (859 aa).

Lysine 17 carries the N6-acetyllysine modification. Serine 60 is subject to Phosphoserine. The segment at 61-170 is disordered; that stretch reads PAKNPSSLFS…KGLEPSQSTA (110 aa). Lysine 71 carries the post-translational modification N6-acetyllysine. Phosphoserine is present on residues serine 82 and serine 94. A compositionally biased stretch (basic residues) spans 94 to 105; the sequence is SPKKKIKLKKSK. Polar residues predominate over residues 106 to 115; that stretch reads NVATEGTSTQ. Residues 125–139 show a composition bias toward acidic residues; the sequence is LEAQGDDMVCDDPEA. The Q motif signature appears at 192–220; it reads SAWKDLFVPRPVLRALSFLGFSAPTPIQA. Residues 224–528 form the Helicase ATP-binding domain; sequence APAIRDKLDI…RILHKKHTKK (305 aa). 237-244 is a binding site for ATP; that stretch reads AETGSGKT. The tract at residues 262–300 is disordered; it reads NAAPPPSNTEAPPGETRTEAGAETRSPGKAEAESDALPD. Residues 277-293 are compositionally biased toward basic and acidic residues; sequence TRTEAGAETRSPGKAEA. 2 positions are modified to phosphoserine: serine 287 and serine 295. Threonine 302 is modified (phosphothreonine). The interval 326 to 376 is disordered; sequence SDQALLFGDDDAGEGPSSLIREKPVPKQNENEEENLDKEQTGNLKQELDDK. A Glycyl lysine isopeptide (Lys-Gly) (interchain with G-Cter in SUMO2) cross-link involves residue lysine 370. Residues 471–474 carry the DEAD box motif; that stretch reads DEAD. One can recognise a Helicase C-terminal domain in the interval 578 to 723; that stretch reads YLYYFLMQYP…LFPVQTKYMD (146 aa). Glycyl lysine isopeptide (Lys-Gly) (interchain with G-Cter in SUMO2) cross-links involve residues lysine 624, lysine 808, and lysine 825. Polar residues-rich tracts occupy residues 799-814 and 823-833; these read PLFTESQKTKYPTQSG and PSKSESALSCL. Positions 799–859 are disordered; it reads PLFTESQKTK…EQPQPSTSAN (61 aa).

Belongs to the DEAD box helicase family. DDX24/MAK5 subfamily. In terms of assembly, interacts with FADD. Interacts with RIPK1; this interaction disrupts RLR signaling activation of IFN-dependent transcription factor IRF7. Interacts with NIP7. Interacts with EP300; this interaction prevents TP53 acetylation mediated by EP300. (Microbial infection) Interacts with HIV-1 virus Gag and Rev proteins. Ubiquitinated by MDM2 without targeting DDX24 for proteasomal degradation. Instead, polyubiquitinated DDX24 promotes interaction with NIP7, a component of pre-rRNP processing complex, and associates with pre-rRNA molecules and pre-ribosomal particles. Ubiquitous. Most abundant in heart and brain, but with lowest levels in thymus and small intestine.

The protein localises to the cytoplasm. Its subcellular location is the nucleus. The enzyme catalyses ATP + H2O = ADP + phosphate + H(+). Functionally, ATP-dependent RNA helicase that plays a role in various aspects of RNA metabolism including pre-mRNA splicing and is thereby involved in different biological processes such as cell cycle regulation or innate immunity. Plays an inhibitory role in TP53 transcriptional activity and subsequently in TP53 controlled cell growth arrest and senescence by inhibiting its EP300 mediated acetylation. Negatively regulates cytosolic RNA-mediated innate immune signaling at least in part by affecting RIPK1/IRF7 interactions. Alternatively, possesses antiviral activity by recognizing gammaherpesvirus transcripts in the context of lytic reactivation. Plays an essential role in cell cycle regulation in vascular smooth muscle cells by interacting with and regulating FANCA (Fanconi anemia complementation group A) mRNA. (Microbial infection) Plays a positive role in HIV-1 infection by promoting Rev-dependent nuclear export of viral RNAs and their packaging into virus particles. This chain is ATP-dependent RNA helicase DDX24 (DDX24), found in Homo sapiens (Human).